The sequence spans 212 residues: Putative 3-methyladenine DNA glycosylase (212 aa).

Belongs to the DNA glycosylase MPG family.

The polypeptide is Putative 3-methyladenine DNA glycosylase (Nocardia farcinica (strain IFM 10152)).